The sequence spans 1189 residues: Pumilio homolog 1 (1189 aa).

Residue Ser2 is modified to N-acetylserine. Ser19 is subject to Phosphoserine. A disordered region spans residues 22–73; the sequence is LKHHPQEPANPNMPVVLTSGTGSQAQPQPAANQALAAGTHSSPVPGSIGVAG. Residues 45 to 58 show a composition bias toward low complexity; it reads QAQPQPAANQALAA. Phosphoserine occurs at positions 75, 98, and 106. Thr112 carries the phosphothreonine modification. Phosphoserine occurs at positions 124, 159, 197, 209, and 229. Positions 233 to 272 are disordered; it reads SCLRKGGFGPRDADSDENDKGEKKNKGTFDGDKLGDLKEE. Residues 250–272 are compositionally biased toward basic and acidic residues; it reads NDKGEKKNKGTFDGDKLGDLKEE. Ser305 carries the post-translational modification Phosphoserine. Over residues 491-503 the composition is skewed to low complexity; it reads QQSAPQAQQGQQQ. 2 disordered regions span residues 491–525 and 614–647; these read QQSA…GQQT and AGTT…SSFY. Over residues 512–525 the composition is skewed to polar residues; the sequence is RPLTPNQNQQGQQT. Residue Thr515 is modified to Phosphothreonine. Residues 627-647 are compositionally biased toward low complexity; that stretch reads QQPQPQPQQQPSNNLASSSFY. Phosphoserine is present on residues Ser710 and Ser715. The segment at 743-773 is disordered; it reads GPVGMPLPSQGPGHSQTPPPSLSSHGSSSSL. Low complexity predominate over residues 764–773; it reads LSSHGSSSSL. The residue at position 797 (Arg797) is an Omega-N-methylarginine. A phosphoserine mark is found at Ser807 and Ser823. The region spanning 829-1171 is the PUM-HD domain; that stretch reads GRSRLLEDFR…HILAKLEKYY (343 aa). 8 Pumilio repeats span residues 849–884, 885–920, 921–958, 959–994, 995–1030, 1031–1066, 1067–1102, and 1106–1145; these read EIAG…LVFN, EILQ…ALAE, RIRG…EMVR, ELDG…FIID, AFKG…PILE, ELHQ…KIVA, EIRG…VLID, and TMND…IVMH. The adenine-nucleotide binding in RNA target stretch occupies residues 864 to 868; that stretch reads SRFIQ. The uracil-nucleotide binding in RNA target stretch occupies residues 900 to 904; it reads NYVIQ. The tract at residues 936–940 is adenine-nucleotide binding in RNA target; that stretch reads CRVIQ. The non-specific-nucleotide binding in RNA target stretch occupies residues 974 to 978; sequence NHVVQ. Positions 1010–1014 are adenine-nucleotide binding in RNA target; it reads CRVIQ. Residues 1046 to 1050 form a uracil-nucleotide binding in RNA target region; that stretch reads NYVIQ. Guanine-nucleotide binding in RNA target stretches follow at residues 1082–1086 and 1083–1086; these read SNVVE and NVVE. A uracil-nucleotide binding in RNA target region spans residues 1125 to 1129; that stretch reads NYVVQ.

Recruits the CCR4-POP2-NOT deadenylase leading to translational inhibition and mRNA degradation. Interacts with TRIM71 (via NHL repeats) in an RNA-dependent manner. Post-translationally, phosphorylation at Ser-715 promotes RNA-binding activity. Following growth factor stimulation phosphorylated at Ser-715, promoting binding to the 3'-UTR of CDKN1B/p27 mRNA. As to expression, widely expressed. Expressed in brain, heart, kidney, liver, lung, skin, intestine, spleen, testis and thymus. Weakly or not expressed in muscles and stomach. Expressed at various stages of myeloid and lymphoid cell development. Highly expressed in testis. Expressed in all major brain regions (at protein level).

It localises to the cytoplasm. It is found in the P-body. The protein resides in the cytoplasmic granule. Functionally, sequence-specific RNA-binding protein that acts as a post-transcriptional repressor by binding the 3'-UTR of mRNA targets. Binds to an RNA consensus sequence, the Pumilio Response Element (PRE), 5'-UGUANAUA-3', that is related to the Nanos Response Element (NRE). Mediates post-transcriptional repression of transcripts via different mechanisms: acts via direct recruitment of the CCR4-POP2-NOT deadenylase leading to translational inhibition and mRNA degradation. Also mediates deadenylation-independent repression by promoting accessibility of miRNAs. Following growth factor stimulation, phosphorylated and binds to the 3'-UTR of CDKN1B/p27 mRNA, inducing a local conformational change that exposes miRNA-binding sites, promoting association of miR-221 and miR-222, efficient suppression of CDKN1B/p27 expression, and rapid entry to the cell cycle. Acts as a post-transcriptional repressor of E2F3 mRNAs by binding to its 3'-UTR and facilitating miRNA regulation. Represses a program of genes necessary to maintain genomic stability such as key mitotic, DNA repair and DNA replication factors. Its ability to repress those target mRNAs is regulated by the lncRNA NORAD (non-coding RNA activated by DNA damage) which, due to its high abundance and multitude of PUMILIO binding sites, is able to sequester a significant fraction of PUM1 and PUM2 in the cytoplasm. Involved in neuronal functions by regulating ATXN1 mRNA levels: acts by binding to the 3'-UTR of ATXN1 transcripts, leading to their down-regulation independently of the miRNA machinery. In testis, acts as a post-transcriptional regulator of spermatogenesis by binding to the 3'-UTR of mRNAs coding for regulators of p53/TP53. Involved in embryonic stem cell renewal by facilitating the exit from the ground state: acts by targeting mRNAs coding for naive pluripotency transcription factors and accelerates their down-regulation at the onset of differentiation. Binds specifically to miRNA MIR199A precursor, with PUM2, regulates miRNA MIR199A expression at a postranscriptional level. The sequence is that of Pumilio homolog 1 from Mus musculus (Mouse).